The following is a 354-amino-acid chain: Uroporphyrinogen decarboxylase (354 aa).

Residues 27–31, F46, D77, Y154, T209, and H327 each bind substrate; that span reads RQAGR.

Belongs to the uroporphyrinogen decarboxylase family. In terms of assembly, homodimer.

The protein localises to the cytoplasm. It carries out the reaction uroporphyrinogen III + 4 H(+) = coproporphyrinogen III + 4 CO2. The protein operates within porphyrin-containing compound metabolism; protoporphyrin-IX biosynthesis; coproporphyrinogen-III from 5-aminolevulinate: step 4/4. Functionally, catalyzes the decarboxylation of four acetate groups of uroporphyrinogen-III to yield coproporphyrinogen-III. This chain is Uroporphyrinogen decarboxylase, found in Salmonella typhi.